The sequence spans 187 residues: Troponin I, slow skeletal muscle (187 aa).

Position 2 is an N-acetylproline (Pro-2). The involved in binding TNC stretch occupies residues 2 to 48 (PEVERKSKITASRKLMLKSLMLAKAKECWEQEHEEREAEKVRYLSER). A Phosphoserine modification is found at Ser-58. Residues 97-118 (LKLKVLDLRGKFKRPPLRRVRV) form an involved in binding TNC and actin region.

The protein belongs to the troponin I family. As to quaternary structure, binds to actin and tropomyosin.

Functionally, troponin I is the inhibitory subunit of troponin, the thin filament regulatory complex which confers calcium-sensitivity to striated muscle actomyosin ATPase activity. This is Troponin I, slow skeletal muscle (Tnni1) from Rattus norvegicus (Rat).